The primary structure comprises 1499 residues: Ubiquitinating/deubiquitinating enzyme SdeA (1499 aa).

The segment at 1 to 193 (MPKYVEGVEL…GKALRENTEK (193 aa)) is deubiquitinase. Residues H64 and D80 each act as for deubiquitinase activity in the active site. Catalysis depends on C118, which acts as the Nucleophile; for deubiquitinase activity. The mono-ADP-ribosyltransferase stretch occupies residues 760 to 1000 (PPTRLFRGLN…KALAAFPSDT (241 aa)). An NAD(+)-binding site is contributed by 766–772 (RGLNLSE). At E860 the chain carries 5-glutamyl glutamate. NAD(+) is bound at residue E862. The stretch at 1059-1181 (KEMGTIRREL…IDTKLADAYL (123 aa)) forms a coiled coil.

This sequence belongs to the SidE family. Interacts with IcmS. Is able to ubiquitinate itself, but this modification is not required to ubiquitinate Rab33b. Post-translationally, glutamylated at Glu-860 by SidJ; glutamylation inhibits SdeA activity to catalyze the production of ADP-ribosylated ubiquitin.

It localises to the secreted. The protein localises to the host cell. It carries out the reaction L-arginyl-[protein] + NAD(+) = N(omega)-(ADP-D-ribosyl)-L-arginyl-[protein] + nicotinamide + H(+). Ubiquitination catalyzed by SdeA is insensitive to the cysteine alkylation agent maleimide, suggesting that a cysteine conjugation of ubiquitin does not form during the reaction. Functionally, secreted effector that interferes with the host cell ubiquitin pathway and is required for intracellular bacterial replication. Catalyzes the ubiquitination of several mammalian Rab proteins (Rab33b, Rab1, Rab6a and Rab30) during L.pneumophila infection, without engaging the standard cellular enzyme cascade (E1 and E2). Transfers an ADP-ribose moiety from NAD to the 'Arg-42' residue of ubiquitin in a reaction that releases nicotinamide. The modified ubiquitin is subsequently transferred to serine residues of the substrate protein via a phosphoribose linker that results in the release of AMP. Cannot ubiquitinate the endosomal Rab5 or the cytoskeletal small GTPase Rac1. Also acts as a deubiquitinase (DUB), catalyzing the cleavage of three of the most abundant polyubiquitin chains ('Lys-11', 'Lys-48' and 'Lys-63') with a distinct preference for 'Lys-63' linkages; is thus able to efficiently remove 'Lys-63'-linked polyubiquitin chains from the phagosomal surface. Is also able to remove NEDD8 from neddylated proteins, but is unable to recognize SUMO. The DUB activity of SdeA is important for regulating the dynamics of ubiquitin association with the bacterial phagosome, but is dispensable for its role in intracellular bacterial replication. This is Ubiquitinating/deubiquitinating enzyme SdeA from Legionella pneumophila subsp. pneumophila (strain Philadelphia 1 / ATCC 33152 / DSM 7513).